Reading from the N-terminus, the 127-residue chain is MVQSMTSVVKAANFILARPTLSKIITPLAQKFTAYAGYREMGLKFNDLLLEETPIMQTAIKRLPSELNYSRNFRILTAHQLALSHQLLPAEKAVKPEEDDNYLIPYILEAEKEAFEKAELDNIEVKA.

This sequence belongs to the UQCRB/QCR7 family. Component of the ubiquinol-cytochrome c oxidoreductase (cytochrome b-c1 complex, complex III, CIII), a multisubunit enzyme composed of 10 subunits. The complex is composed of 3 respiratory subunits cytochrome b (COB), cytochrome c1 (CYT1) and Rieske protein (RIP1), 2 core protein subunits COR1 and QCR2, and 5 low-molecular weight protein subunits QCR6, QCR7, QCR8, QCR9 and QCR10. The complex exists as an obligatory dimer and forms supercomplexes (SCs) in the inner mitochondrial membrane with a monomer or a dimer of cytochrome c oxidase (complex IV, CIV), resulting in 2 different assemblies (supercomplexes III(2)IV and III(2)IV(2)).

It is found in the mitochondrion inner membrane. Component of the ubiquinol-cytochrome c oxidoreductase, a multisubunit transmembrane complex that is part of the mitochondrial electron transport chain which drives oxidative phosphorylation. Plays an important role in the uptake of multiple carbon sources such acetate, lactate, amino acids or GlcNAc present in different host niches. This chain is Cytochrome b-c1 complex subunit 7, mitochondrial, found in Candida albicans (strain SC5314 / ATCC MYA-2876) (Yeast).